The chain runs to 609 residues: Glutamine--fructose-6-phosphate aminotransferase [isomerizing] (609 aa).

C2 serves as the catalytic Nucleophile; for GATase activity. One can recognise a Glutamine amidotransferase type-2 domain in the interval 2–217; it reads CGIVGAIAGR…DGDTAEIRRD (216 aa). 2 SIS domains span residues 285–425 and 458–599; these read AESV…LRGA and WAEC…VDKP. The active-site For Fru-6P isomerization activity is K604.

As to quaternary structure, homodimer.

It localises to the cytoplasm. The catalysed reaction is D-fructose 6-phosphate + L-glutamine = D-glucosamine 6-phosphate + L-glutamate. Functionally, catalyzes the first step in hexosamine metabolism, converting fructose-6P into glucosamine-6P using glutamine as a nitrogen source. The protein is Glutamine--fructose-6-phosphate aminotransferase [isomerizing] of Xylella fastidiosa (strain 9a5c).